The chain runs to 1134 residues: Spermatogenesis-associated protein 31C2 (1134 aa).

A helical transmembrane segment spans residues 23-43 (PWVLDIFLTLVFALGFFFLLL). 7 disordered regions span residues 54–87 (PPSP…NHSL), 115–243 (LEKG…LLTP), 477–504 (PGTS…EAQT), 524–561 (TPQN…DSGS), 727–807 (MPER…PTVP), 928–1007 (NMGH…PSIS), and 1111–1134 (AASS…IRDQ). A compositionally biased stretch (basic residues) spans 59–87 (PKKRKRHLVSQRPAGRRGRPRGRMKNHSL). A compositionally biased stretch (basic and acidic residues) spans 132-148 (VGKRTPDGASRSSHEPT). Residues 185-201 (SSLSASQPPEPSLLLEH) show a composition bias toward low complexity. A compositionally biased stretch (pro residues) spans 204–235 (PEPPALFPHPPRTPDPLACSPPPPKGFTPPPL). A compositionally biased stretch (polar residues) spans 489–504 (WQSSTSTGESSKEAQT). Polar residues-rich tracts occupy residues 773 to 794 (LTYS…SSRA) and 937 to 948 (PNCQGSCKSQSP). Residues 954–970 (HKRENSRKPNLEKHEEM) are compositionally biased toward basic and acidic residues. The span at 1111–1124 (AASSQQATLKNQSR) shows a compositional bias: polar residues. Over residues 1125 to 1134 (PNRDRQIRDQ) the composition is skewed to basic and acidic residues.

It belongs to the SPATA31 family.

It is found in the membrane. In terms of biological role, may play a role in spermatogenesis. This is Spermatogenesis-associated protein 31C2 (SPATA31C2) from Homo sapiens (Human).